A 213-amino-acid polypeptide reads, in one-letter code: Imidazole glycerol phosphate synthase subunit HisH (213 aa).

The Glutamine amidotransferase type-1 domain occupies 3-213 (MIGVIDYGMG…VGIVTGRENG (211 aa)). The active-site Nucleophile is the C81. Active-site residues include H188 and E190.

Heterodimer of HisH and HisF.

The protein localises to the cytoplasm. It catalyses the reaction 5-[(5-phospho-1-deoxy-D-ribulos-1-ylimino)methylamino]-1-(5-phospho-beta-D-ribosyl)imidazole-4-carboxamide + L-glutamine = D-erythro-1-(imidazol-4-yl)glycerol 3-phosphate + 5-amino-1-(5-phospho-beta-D-ribosyl)imidazole-4-carboxamide + L-glutamate + H(+). It carries out the reaction L-glutamine + H2O = L-glutamate + NH4(+). It functions in the pathway amino-acid biosynthesis; L-histidine biosynthesis; L-histidine from 5-phospho-alpha-D-ribose 1-diphosphate: step 5/9. IGPS catalyzes the conversion of PRFAR and glutamine to IGP, AICAR and glutamate. The HisH subunit catalyzes the hydrolysis of glutamine to glutamate and ammonia as part of the synthesis of IGP and AICAR. The resulting ammonia molecule is channeled to the active site of HisF. The sequence is that of Imidazole glycerol phosphate synthase subunit HisH from Geobacillus thermodenitrificans (strain NG80-2).